The chain runs to 450 residues: Phosphoglucosamine mutase (450 aa).

The active-site Phosphoserine intermediate is the S101. Residues S101, D240, D242, and D244 each contribute to the Mg(2+) site. S101 bears the Phosphoserine mark.

This sequence belongs to the phosphohexose mutase family. Requires Mg(2+) as cofactor. Post-translationally, activated by phosphorylation. Phosphorylated by StkP in vivo.

It carries out the reaction alpha-D-glucosamine 1-phosphate = D-glucosamine 6-phosphate. Catalyzes the conversion of glucosamine-6-phosphate to glucosamine-1-phosphate. This is Phosphoglucosamine mutase from Streptococcus pneumoniae (strain ATCC BAA-255 / R6).